Consider the following 505-residue polypeptide: MSSLARWIITIGLEVHVQLSTKLKLFSRALAENHKAPNSAVSFFDISLPGTLPIVNPEAIRLATKAALVCNCEIAPSLEFDRKHYVYSDQRAGFQITQKRRPLGTNGFVRLNAALDGVEKDQLVEIKCLQLEQDTGKTVNELNEDLVLLDFNRANVPLIEVVTAPCFHSPHDAACFLRKLQTILRLANVSDAKMELGNMRCDVNVSVASAENPTKQLATVELKNLPSIRYVEIASELEAKRQIELLNNGSSPVPETRSYDVEKNATVFLRKKRGPSDYMYLPEADIPEITLTSAYVDDVRKSIGPSVDELLETLLQKKYFNLQDAKALLQTEDGLSYYQVLVGELEKVTSSMSPDVQLKAEKLIPFWLVNEYVGDCANAPDEKRDLDTIPPADLAFLLGNLANGTLSAYAAKHILQLAVQDPKKNSIYKLVNENANAEFDENTLKDLVNELIQANGDKVNALKVGKDGVLNWFIGNVMRRSSGKAKPDEIKRLINNTVLCENSSK.

Belongs to the GatB/GatE family. GatB subfamily. As to quaternary structure, subunit of the heterotrimeric GatCAB amidotransferase (AdT) complex, composed of A, B and C subunits.

The protein resides in the mitochondrion. The enzyme catalyses L-glutamyl-tRNA(Gln) + L-glutamine + ATP + H2O = L-glutaminyl-tRNA(Gln) + L-glutamate + ADP + phosphate + H(+). In terms of biological role, allows the formation of correctly charged Gln-tRNA(Gln) through the transamidation of misacylated Glu-tRNA(Gln) in the mitochondria. The reaction takes place in the presence of glutamine and ATP through an activated gamma-phospho-Glu-tRNA(Gln). The chain is Glutamyl-tRNA(Gln) amidotransferase subunit B, mitochondrial from Schizosaccharomyces japonicus (strain yFS275 / FY16936) (Fission yeast).